A 385-amino-acid polypeptide reads, in one-letter code: U6 small nuclear RNA (adenine-(43)-N(6))-methyltransferase (385 aa).

S-adenosyl-L-methionine-binding residues include Arg-54, Gly-83, Glu-106, and Asn-155.

Belongs to the methyltransferase superfamily. METTL16/RlmF family.

It is found in the cytoplasm. The protein resides in the nucleus. The catalysed reaction is adenosine in U6 snRNA + S-adenosyl-L-methionine = N(6)-methyladenosine in U6 snRNA + S-adenosyl-L-homocysteine + H(+). RNA N6-methyltransferase that mediates N6-methylation of adenine of U6 small nuclear RNA (U6 snRNA). In Schizosaccharomyces pombe (strain 972 / ATCC 24843) (Fission yeast), this protein is U6 small nuclear RNA (adenine-(43)-N(6))-methyltransferase.